We begin with the raw amino-acid sequence, 152 residues long: MLP-like protein 165 (152 aa).

The protein belongs to the MLP family.

The sequence is that of MLP-like protein 165 (MLP165) from Arabidopsis thaliana (Mouse-ear cress).